Reading from the N-terminus, the 154-residue chain is OCIA domain-containing protein 2 (154 aa).

The interval Met1 to Gln22 is disordered. An OCIA domain is found at Met1 to Ala120. N6-acetyllysine is present on Lys41.

Interacts (via OCIA domain) with OCIAD1/ASRIJ and STAT3.

It localises to the endosome. The protein resides in the mitochondrion. The protein localises to the mitochondrion inner membrane. Has an essential role in the assembly of mitochondrial respiratory chain complex III. Is also required for STAT3 activation and plays a role in cell migration. The chain is OCIA domain-containing protein 2 (OCIAD2) from Homo sapiens (Human).